A 72-amino-acid chain; its full sequence is Protein kish-A (72 aa).

Residues 1–26 (MSAIFNFQSLLTVILLLICTCAYIRS) form the signal peptide. Topologically, residues 27–53 (LAPSLLDRNKTGLLGIFWKCARIGERK) are extracellular. N-linked (GlcNAc...) asparagine glycosylation is present at N35. A helical transmembrane segment spans residues 54-71 (SPYVAVCCIVMAFSILFI). Position 72 (Q72) is a topological domain, cytoplasmic.

Belongs to the KISH family.

It localises to the golgi apparatus membrane. Involved in the early part of the secretory pathway. This chain is Protein kish-A (TMEM167A), found in Bos taurus (Bovine).